The primary structure comprises 557 residues: Protein PNS1 (557 aa).

Residues 1–58 (MSTEKQYQPQQPPPAYTGQGPDNGNAYGYPESYGKTETHSGDSCSGDTSMNPQQQGQQ) form a disordered region. Residues 1–99 (MSTEKQYQPQ…DNNKPKFNDW (99 aa)) lie on the Cytoplasmic side of the membrane. Polar residues predominate over residues 41 to 58 (GDSCSGDTSMNPQQQGQQ). Residues 100–120 (PFIIVFLLTLCGFIVVASLTL) form a helical membrane-spanning segment. Topologically, residues 121 to 147 (RAWSQTYSSTGSGIYHDFDTGTLNTNS) are extracellular. A helical transmembrane segment spans residues 148 to 168 (VILLVFSVVIAIFFAFIGIVL). The Cytoplasmic segment spans residues 169 to 174 (CRAYPK). The helical transmembrane segment at 175–195 (FFIYAGMIVNILAALGTAIMY) threads the bilayer. At 196–200 (MSLKY) the chain is on the extracellular side. A helical membrane pass occupies residues 201 to 221 (WSAGIVFLIFTFMTAWCYWGM). Over 222–246 (RSRIPLTVAILRVIVLAMKNCPQSL) the chain is Cytoplasmic. A helical transmembrane segment spans residues 247–267 (FVSFFGTIVASAFAMLFSTVV). Residues 268-292 (VATYMKYDPSNTNSGCNVSGGDCSH) are Extracellular-facing. N284 carries N-linked (GlcNAc...) asparagine glycosylation. The chain crosses the membrane as a helical span at residues 293–313 (AKLIGVLVVVFFCGYYISEVI). At 314 to 350 (RNVMHCTVSGVFGSWYYRYKSDQGMPKWPAMGAFKRA) the chain is on the cytoplasmic side. Residues 351–371 (MTYSFGSICFGSLIVSIIETF) form a helical membrane-spanning segment. At 372–393 (RQLLQLGKQAAIASTDNANWIR) the chain is on the extracellular side. Residues 394 to 414 (IIFWLIDMLVGFIQWIAQYFN) traverse the membrane as a helical segment. Residues 415-454 (HYAYCIIALYGKPYLKAAKQTWYMFREKGIDALINDNLVN) are Cytoplasmic-facing. A helical transmembrane segment spans residues 455-475 (VALGFYSLFASYMSCLFAFLY). Topologically, residues 476–488 (LRFTKPGYNSDGD) are extracellular. A helical membrane pass occupies residues 489 to 509 (FNAPLMAFAFVIALQLTNIAN). Residues 510-557 (ETIRSGCATFFTALGHDPEVFQAQYPDRFDEIFRSYPQVLNKLTHQDV) lie on the Cytoplasmic side of the membrane.

It belongs to the CTL (choline transporter-like) family.

The protein resides in the cell membrane. Its function is as follows. Probably involved in transport through the plasma membrane. The protein is Protein PNS1 (PNS1) of Candida glabrata (strain ATCC 2001 / BCRC 20586 / JCM 3761 / NBRC 0622 / NRRL Y-65 / CBS 138) (Yeast).